The primary structure comprises 287 residues: Energy-coupling factor transporter ATP-binding protein EcfA2 (287 aa).

Residues 3-246 (VKFSQVSYVY…TNYVNQLHLD (244 aa)) form the ABC transporter domain. 40–47 (GQTGSGKS) contributes to the ATP binding site.

Belongs to the ABC transporter superfamily. Energy-coupling factor EcfA family. Forms a stable energy-coupling factor (ECF) transporter complex composed of 2 membrane-embedded substrate-binding proteins (S component), 2 ATP-binding proteins (A component) and 2 transmembrane proteins (T component).

The protein resides in the cell membrane. Its function is as follows. ATP-binding (A) component of a common energy-coupling factor (ECF) ABC-transporter complex. Unlike classic ABC transporters this ECF transporter provides the energy necessary to transport a number of different substrates. The chain is Energy-coupling factor transporter ATP-binding protein EcfA2 from Staphylococcus saprophyticus subsp. saprophyticus (strain ATCC 15305 / DSM 20229 / NCIMB 8711 / NCTC 7292 / S-41).